Consider the following 416-residue polypeptide: Gasdermin-B (416 aa).

The tract at residues 1-280 (MFSVFEEITR…EKRKDVLNSL (280 aa)) is triggers pyroptosis. 2 beta stranded membrane-spanning segments follow: residues 83-101 (EFQI…VRLP) and 102-125 (KEIT…ENRI). Residues Lys166, Lys177, Lys190, and Lys192 each participate in a (Microbial infection) Glycyl lysine isopeptide (Lys-Gly) (interchain with G-Cter in ubiquitin) cross-link. Beta stranded transmembrane passes span 167-183 (EETL…SQIS) and 184-198 (QGHL…REVT). Residues 229 to 250 (KSFPEEKDGASSCLGKSLGSED) form a disordered region. Residues 248 to 276 (SEDSRNMKEKLEDMESVLKDLTEEKRKDV) adopt a coiled-coil conformation. Met308 is covalently cross-linked ((Microbial infection) Glycyl lysine isopeptide (Lys-Gly) (interchain with G-Cter in ubiquitin)).

Belongs to the gasdermin family. In terms of assembly, homooligomer; homooligomeric ring-shaped pore complex containing 24-26 subunits when inserted in the membrane. In terms of processing, cleavage by granzyme A (GZMA) relieves autoinhibition by releasing the N-terminal moiety (Gasdermin-B, N-terminal) that initiates pyroptosis. Not cleaved by other granzymes. Major cleavage site takes places after Lys-244; a minor cleavage site takes place after Lys-229. Cleavage by neutrophil elastase ELANE, inhibits its ability to trigger pyroptosis. Palmitoylated. Post-translationally, (Microbial infection) Ubiquitinated by S.flexneri IpaH7.8, leading to its degradation by the proteasome, thereby preventing its ability to form pores in bacterial-derived membranes. In terms of tissue distribution, in the gastrointestinal tract, expressed in proliferating cells, including in the basal cell layer of esophagus and in isthmus/neck of stomach.

It localises to the cytoplasm. The protein resides in the cell membrane. With respect to regulation, the full-length protein before cleavage is inactive: intramolecular interactions between N- and C-terminal domains mediate autoinhibition in the absence of activation signal. The intrinsic pyroptosis-inducing activity is carried by the released N-terminal moiety (Gasdermin-B, N-terminal) following cleavage by granzyme A (GZMA). Functionally, precursor of a pore-forming protein that acts as a downstream mediator of granzyme-mediated cell death. This form constitutes the precursor of the pore-forming protein: upon cleavage, the released N-terminal moiety (Gasdermin-B, N-terminal) binds to membranes and forms pores, triggering pyroptosis. Also acts as a regulator of epithelial cell repair independently of programmed cell death: translocates to the plasma membrane and promotes epithelial maintenance and repair by regulating PTK2/FAK-mediated phosphorylation of PDGFA. In terms of biological role, pore-forming protein produced by cleavage by granzyme A (GZMA), which causes membrane permeabilization and pyroptosis in target cells of cytotoxic T and natural killer (NK) cells. Key downstream mediator of granzyme-mediated cell death: (1) granzyme A (GZMA), delivered to target cells from cytotoxic T- and NK-cells, (2) specifically cleaves Gasdermin-B to generate this form. After cleavage, moves to the plasma membrane, homooligomerizes within the membrane and forms pores of 10-15 nanometers (nm) of inner diameter, triggering pyroptosis. The different isoforms recognize and bind different phospholipids on membranes, promoting cell death of different target cells. Precursor of a pore-forming protein that acts as a downstream mediator of granzyme-mediated cell death and mediates pyroptosis. Following cleavage and activation by granzyme A (GZMA), the N-terminal part binds to membrane inner leaflet lipids, homooligomerizes within the human plasma membrane and forms pores of 10-15 nanometers (nm) of inner diameter, triggering pyroptosis. Recognizes and binds membrane inner leaflet lipids of human cells, such as phosphatidylinositol 4-phosphate, phosphatidylinositol 5-phosphate, bisphosphorylated phosphatidylinositols, such as phosphatidylinositol (4,5)-bisphosphate, and more weakly to phosphatidic acid. Also binds sufatide, a component of the apical membrane of epithelial cells. Its function is as follows. Precursor of a pore-forming protein that acts as a downstream mediator of granzyme-mediated cell death and mediates pyroptosis of human cells. Following cleavage and activation by granzyme A (GZMA), the N-terminal part binds to membrane inner leaflet lipids, homooligomerizes within the human plasma membrane and forms pores of 10-15 nanometers (nm) of inner diameter, triggering pyroptosis. Functionally, precursor of a pore-forming protein that acts as a downstream mediator of granzyme-mediated cell death and specifically mediates cell death of Gram-negative bacteria in response to infection. Following cleavage and activation by granzyme A (GZMA), the N-terminal part recognizes and binds phospholipids found on Gram-negative bacterial membranes, such as lipid A and cariolipin, homooligomerizes within the bacterial membranes and forms pores, triggering pyroptosis followed by cell death. In contrast to isoform 4, does not bind to membrane inner leaflet lipids of host human cell, such as phosphatidylinositol 4-phosphate, phosphatidylinositol 5-phosphate, bisphosphorylated phosphatidylinositols, such as phosphatidylinositol (4,5)-bisphosphate. In terms of biological role, not able to trigger pyroptosis. The polypeptide is Gasdermin-B (Homo sapiens (Human)).